A 519-amino-acid polypeptide reads, in one-letter code: MAGYKPVSIQTYPVLGEKITQDTLYWNNYKTPVQIKEFGAVSKVDFSPQPPYNYAVTASSRIHIYGRYSQEPIKTFSRFKDTAYCATFRQDGRLLVAGSEDGGVQLFDISGRAPLRQFEGHTKAVHSVDFTADKYHVVSGADDYTVKLWDIPNSKEILTFKEHSDYVRCGCASKLNTDLFVTGSYDHTVKMFDARTNQSVISVEHGQPVESVLLFPSGGLLVSAGGRYVKVWDMLKGGQLLVSLKNHHKTVTCLCLSSSGQRLLSGSLDRKVKVYSTTSYKVVHSFDYTASILSLALAHEDETIVVGMTNGILSVKHRKSEAKKDSVPRRRRPAYRTFIKGKNYMKQQDDILINRPSKKHLELYDRDLKNFRISKALDRVLEPTCTIKTPEVTVSIIKELNRRGVLANALAGRDEKEISRVLNFLIRNLSQPRFAPVLINAAEIIIDIYLPVIGQSPVVDKKFLILQGLVEKEIDYQRELLETLGMMDMLFATMTRKESTSVLQHNTSDGFLENNKIES.

Residue Ala2 is modified to N-acetylalanine. 7 WD repeats span residues 36–75 (KEFG…PIKT), 78–117 (RFKD…PLRQ), 120–159 (GHTK…EILT), 162–202 (EHSD…SVIS), 204–242 (EHGQ…QLLV), 246–285 (NHHK…VVHS), and 287–326 (DYTA…KKDS). Residue Lys249 forms a Glycyl lysine isopeptide (Lys-Gly) (interchain with G-Cter in SUMO2) linkage.

Part of the small subunit (SSU) processome, composed of more than 70 proteins and the RNA chaperone small nucleolar RNA (snoRNA) U3. May be a component of the proposed t-UTP subcomplex of the ribosomal small subunit (SSU) processome containing at least UTP4, WDR43, HEATR1, UTP15, WDR75. Interacts directly with UTP4 and WDR43.

The protein localises to the nucleus. The protein resides in the nucleolus. Its function is as follows. Ribosome biogenesis factor. Involved in nucleolar processing of pre-18S ribosomal RNA. Required for optimal pre-ribosomal RNA transcription by RNA polymerase I. Part of the small subunit (SSU) processome, first precursor of the small eukaryotic ribosomal subunit. During the assembly of the SSU processome in the nucleolus, many ribosome biogenesis factors, an RNA chaperone and ribosomal proteins associate with the nascent pre-rRNA and work in concert to generate RNA folding, modifications, rearrangements and cleavage as well as targeted degradation of pre-ribosomal RNA by the RNA exosome. The polypeptide is U3 small nucleolar RNA-associated protein 15 homolog (Bos taurus (Bovine)).